A 279-amino-acid polypeptide reads, in one-letter code: Phycobilisome rod-core linker polypeptide CpcG1 (279 aa).

In terms of domain architecture, PBS-linker spans 11–189 (TTQNQRVEGY…YWRNRLLEQF (179 aa)).

Belongs to the phycobilisome linker protein family. As to quaternary structure, the phycobilisome is a hemidiscoidal structure that is composed of two distinct substructures: a core complex and a number of rods radiating from the core.

The protein localises to the cellular thylakoid membrane. In terms of biological role, rod-core linker protein required for attachment of phycocyanin to allophycocyanin in cores of phycobilisomes. Its function is as follows. Linker polypeptides determine the state of aggregation and the location of the disk-shaped phycobiliprotein units within the phycobilisome and modulate their spectroscopic properties in order to mediate a directed and optimal energy transfer. This chain is Phycobilisome rod-core linker polypeptide CpcG1 (cpcG1), found in Mastigocladus laminosus (Fischerella sp.).